The primary structure comprises 663 residues: Translation factor GUF1 homolog, mitochondrial (663 aa).

Positions 64–250 (EKIRNFSIIA…AVIERIPPPP (187 aa)) constitute a tr-type G domain. GTP contacts are provided by residues 73-80 (AHIDHGKS), 143-147 (DTPGH), and 197-200 (NKID).

It belongs to the TRAFAC class translation factor GTPase superfamily. Classic translation factor GTPase family. LepA subfamily.

The protein resides in the mitochondrion inner membrane. It carries out the reaction GTP + H2O = GDP + phosphate + H(+). In terms of biological role, promotes mitochondrial protein synthesis. May act as a fidelity factor of the translation reaction, by catalyzing a one-codon backward translocation of tRNAs on improperly translocated ribosomes. Binds to mitochondrial ribosomes in a GTP-dependent manner. In Arabidopsis thaliana (Mouse-ear cress), this protein is Translation factor GUF1 homolog, mitochondrial.